A 276-amino-acid chain; its full sequence is MRKWMIVAAVAAVFGLSACNNGDSEVIVKTKDGNITKEEFYNEMKARVGKEVIRDLVHEKVLSKKYKVTDKEIDKEIENLKEMYGTQYDLVVQQNGEKAIRDMVKLDLLRQKAAMEDIKVTDKELKDYYKNYKPKIRASHILVKDEKTAEEIKTKLDKGEDFAKLAKQYSQDPGSAPNGGDLGWFGPGKMVKEFEDAAYKLKVGQVSDPVKTDYGYHIIKVTDKEEKKPFNEMKEEIEFEVKQSKLDPAKVQSKVEKLIKDAKVEIEDKDLQDVLK.

Positions 1 to 18 (MRKWMIVAAVAAVFGLSA) are cleaved as a signal peptide. Residue C19 is the site of N-palmitoyl cysteine attachment. Residue C19 is the site of S-diacylglycerol cysteine attachment. A PpiC domain is found at 133 to 223 (KPKIRASHIL…YGYHIIKVTD (91 aa)).

This sequence belongs to the PrsA family.

It localises to the cell membrane. The enzyme catalyses [protein]-peptidylproline (omega=180) = [protein]-peptidylproline (omega=0). Functionally, plays a major role in protein secretion by helping the post-translocational extracellular folding of several secreted proteins. The protein is Foldase protein PrsA of Geobacillus sp. (strain WCH70).